The sequence spans 96 residues: Protein YdfX (96 aa).

This chain is Protein YdfX (ydfX), found in Escherichia coli (strain K12).